The primary structure comprises 92 residues: Secreted RxLR effector protein 21 (92 aa).

A signal peptide spans methionine 1–alanine 21. The short motif at arginine 30–arginine 33 is the RxLR element.

This sequence belongs to the RxLR effector family.

Its subcellular location is the secreted. It is found in the host nucleus. The protein resides in the host cytoplasm. Secreted effector that completely suppresses the host cell death induced by cell death-inducing proteins. In Plasmopara viticola (Downy mildew of grapevine), this protein is Secreted RxLR effector protein 21.